A 318-amino-acid chain; its full sequence is Olfactory receptor 52D1 (318 aa).

At 1-28 the chain is on the extracellular side; it reads MSDSNLSDNHLPDTFFLTGIPGLEAAHF. N5 carries an N-linked (GlcNAc...) asparagine glycan. Residues 29–49 traverse the membrane as a helical segment; that stretch reads WIAIPFCAMYLVALVGNAALI. At 50-57 the chain is on the cytoplasmic side; it reads LVIAMDNA. Residues 58–78 traverse the membrane as a helical segment; the sequence is LHAPMYLFLCLLSLTDLALSS. At 79 to 102 the chain is on the extracellular side; sequence TTVPKMLAILWLHAGEISFGGCLA. C100 and C192 are joined by a disulfide. Residues 103-123 traverse the membrane as a helical segment; the sequence is QMFCVHSIYALESSILLAMAF. Topologically, residues 124-142 are cytoplasmic; sequence DRYVAICNPLRYTTILNHA. The chain crosses the membrane as a helical span at residues 143–163; that stretch reads VIGRIGFVGLFRSVAIVSPFI. At 164–199 the chain is on the extracellular side; it reads FLLRRLPYCGHRVMTHTYCEHMGIARLACANITVNI. A helical transmembrane segment spans residues 200-220; sequence VYGLTVALLAMGLDSILIAIS. Residues 221 to 240 lie on the Cytoplasmic side of the membrane; the sequence is YGFILHAVFHLPSHDAQHKA. A helical membrane pass occupies residues 241-261; the sequence is LSTCGSHIGIILVFYIPAFFS. Residues 262-277 lie on the Extracellular side of the membrane; the sequence is FLTHRFGHHEVPKHVH. A helical membrane pass occupies residues 278-298; the sequence is IFLANLYVLVPPVLNPILYGA. Over 299-318 the chain is Cytoplasmic; it reads RTKEIRSRLLKLLHLGKTSI.

Belongs to the G-protein coupled receptor 1 family.

The protein localises to the cell membrane. In terms of biological role, odorant receptor. The polypeptide is Olfactory receptor 52D1 (OR52D1) (Homo sapiens (Human)).